The chain runs to 761 residues: 3'-5' RNA nuclease TATDN2 (761 aa).

Disordered regions lie at residues 1–90, 135–181, 197–294, 318–337, 343–364, and 388–486; these read MASE…HFLG, CSLK…LRDQ, KSMP…RRTV, KDRE…SDVE, RFSQ…SSFT, and SSPK…PKSH. Low complexity-rich tracts occupy residues 33-52 and 66-85; these read APSS…PSSP and SRRL…SSFS. A compositionally biased stretch (basic and acidic residues) spans 247–294; the sequence is QKEKDATPEVSMEEDKTVPERSSFYDRRVVIDPQEKPSEEPLGDRRTV. Residues 388–402 are compositionally biased toward low complexity; sequence SSPKPSSYPSTGSSS. Over residues 417-431 the composition is skewed to polar residues; sequence SDYSPNSTGSVQNTS. Over residues 452–470 the composition is skewed to basic and acidic residues; sequence RSSEEREVKEKRTFQEEMP. A divalent metal cation is bound by residues His-499, His-501, Glu-593, His-630, His-655, and Asp-707.

This sequence belongs to the metallo-dependent hydrolases superfamily. TatD-type hydrolase family. The cofactor is Mg(2+).

The protein localises to the nucleus. Its function is as follows. Mg(2+)-dependent 3'RNA exonuclease and endonuclease that resolves R-loops via specific degradation of R-loop RNA stucture. Shows no activity against D-loop and minimal activity against the RNA strand of an RNA-DNA hybrid duplex oligomer. Has no 3' or 5' exonuclease activity, no uracil glycosylase activity, and no 5' flap endonuclease activity on DNA substrates. May have a role in maintaining genomic stability through its role in R-loop resolution. The chain is 3'-5' RNA nuclease TATDN2 (TATDN2) from Homo sapiens (Human).